An 89-amino-acid polypeptide reads, in one-letter code: Small ribosomal subunit protein uS15 (89 aa).

This sequence belongs to the universal ribosomal protein uS15 family. In terms of assembly, part of the 30S ribosomal subunit. Forms a bridge to the 50S subunit in the 70S ribosome, contacting the 23S rRNA.

In terms of biological role, one of the primary rRNA binding proteins, it binds directly to 16S rRNA where it helps nucleate assembly of the platform of the 30S subunit by binding and bridging several RNA helices of the 16S rRNA. Forms an intersubunit bridge (bridge B4) with the 23S rRNA of the 50S subunit in the ribosome. This is Small ribosomal subunit protein uS15 from Protochlamydia amoebophila (strain UWE25).